The chain runs to 953 residues: Isoleucine--tRNA ligase (953 aa).

A 'HIGH' region motif is present at residues 58-68 (PYANGFIHLGH). Residue E573 participates in L-isoleucyl-5'-AMP binding. Residues 614-618 (KMSKS) carry the 'KMSKS' region motif. Residue K617 participates in ATP binding. Residues C916, C919, C936, and C939 each coordinate Zn(2+).

It belongs to the class-I aminoacyl-tRNA synthetase family. IleS type 1 subfamily. As to quaternary structure, monomer. The cofactor is Zn(2+).

It localises to the cytoplasm. The enzyme catalyses tRNA(Ile) + L-isoleucine + ATP = L-isoleucyl-tRNA(Ile) + AMP + diphosphate. In terms of biological role, catalyzes the attachment of isoleucine to tRNA(Ile). As IleRS can inadvertently accommodate and process structurally similar amino acids such as valine, to avoid such errors it has two additional distinct tRNA(Ile)-dependent editing activities. One activity is designated as 'pretransfer' editing and involves the hydrolysis of activated Val-AMP. The other activity is designated 'posttransfer' editing and involves deacylation of mischarged Val-tRNA(Ile). The polypeptide is Isoleucine--tRNA ligase (Blochmanniella floridana).